The sequence spans 73 residues: Large ribosomal subunit protein bL31 (73 aa).

Belongs to the bacterial ribosomal protein bL31 family. Type A subfamily. In terms of assembly, part of the 50S ribosomal subunit.

Functionally, binds the 23S rRNA. The protein is Large ribosomal subunit protein bL31 of Rhizobium etli (strain CIAT 652).